A 473-amino-acid polypeptide reads, in one-letter code: Photosystem II CP43 reaction center protein (473 aa).

A propeptide spanning residues 1–14 is cleaved from the precursor; it reads MKTLYSLRRFYPVE. N-acetylthreonine is present on Thr-15. Thr-15 is subject to Phosphothreonine. Helical transmembrane passes span 69–93, 134–155, 178–200, 255–275, and 291–312; these read LFEV…PHLA, LLGP…KDRN, KALY…RKIT, KPFA…LSYS, and WFNN…ASQA. Glu-367 contributes to the [CaMn4O5] cluster binding site. A helical membrane pass occupies residues 447–471; the sequence is RARAAAAGFEKGIDRDFEPVLSMTP.

It belongs to the PsbB/PsbC family. PsbC subfamily. In terms of assembly, PSII is composed of 1 copy each of membrane proteins PsbA, PsbB, PsbC, PsbD, PsbE, PsbF, PsbH, PsbI, PsbJ, PsbK, PsbL, PsbM, PsbT, PsbX, PsbY, PsbZ, Psb30/Ycf12, at least 3 peripheral proteins of the oxygen-evolving complex and a large number of cofactors. It forms dimeric complexes. It depends on Binds multiple chlorophylls and provides some of the ligands for the Ca-4Mn-5O cluster of the oxygen-evolving complex. It may also provide a ligand for a Cl- that is required for oxygen evolution. PSII binds additional chlorophylls, carotenoids and specific lipids. as a cofactor.

Its subcellular location is the plastid. It localises to the chloroplast thylakoid membrane. Functionally, one of the components of the core complex of photosystem II (PSII). It binds chlorophyll and helps catalyze the primary light-induced photochemical processes of PSII. PSII is a light-driven water:plastoquinone oxidoreductase, using light energy to abstract electrons from H(2)O, generating O(2) and a proton gradient subsequently used for ATP formation. The sequence is that of Photosystem II CP43 reaction center protein from Calycanthus floridus var. glaucus (Eastern sweetshrub).